Here is a 455-residue protein sequence, read N- to C-terminus: Lysine histidine transporter-like 4 (455 aa).

Topologically, residues 1–38 (MAGIPDHIQDQHLVEEDQPFDLEDWLPITASRNANWYY) are cytoplasmic. Residues 39-59 (SAFHNVTAIVGAGVLGLPYAM) traverse the membrane as a helical segment. The Extracellular portion of the chain corresponds to 60–61 (SE). Residues 62–82 (LGWGPGVVVLILSWVITLYTL) traverse the membrane as a helical segment. Residues 83 to 113 (WQMIEMHEMFEGQRFDRYHELGQAAFGKKLG) are Cytoplasmic-facing. A helical transmembrane segment spans residues 114–134 (LYIIVPLQLLVEISVCIVYMV). Over 135-158 (TGGKSLKNVHDLALGDGDKCTKLR) the chain is Extracellular. The chain crosses the membrane as a helical span at residues 159–179 (IQHFILIFASSQFVLSLLKNF). Over 180 to 181 (NS) the chain is Cytoplasmic. The helical transmembrane segment at 182 to 202 (ISGVSLVAAVMSVSYSTIAWV) threads the bilayer. Residues 203–226 (ASLRKGATTGSVEYGYRKRTTSVP) lie on the Extracellular side of the membrane. Residues 227 to 247 (LAFLSALGEMAFAYAGHNVVL) form a helical membrane-spanning segment. Topologically, residues 248-267 (EIQATIPSTPENPSKRPMWK) are cytoplasmic. Residues 268-288 (GAVVAYIIVAFCYFPVALVGF) traverse the membrane as a helical segment. Residues 289–307 (KTFGNSVEESILESLTKPT) are Extracellular-facing. The helical transmembrane segment at 308 to 328 (ALVIVANMFVVIHLLGSYQVY) threads the bilayer. The Cytoplasmic segment spans residues 329 to 357 (AMPVFDMIESVMIRIWHFSPTRVLRFTIR). Residues 358–378 (WTFVAATMGIAVGLPYYSALL) form a helical membrane-spanning segment. Residue Ser379 is a topological domain, extracellular. Residues 380-400 (FFGGFVFAPTTYFIPCIMWLI) traverse the membrane as a helical segment. Topologically, residues 401–412 (LKKPKRFSLSWC) are cytoplasmic. Residues 413–433 (MNWFCIIFGLVLMIIAPIGGL) form a helical membrane-spanning segment. Over 434-455 (AKLIYNIQKGTLPNSRCNLPKH) the chain is Extracellular.

Belongs to the amino acid/polyamine transporter 2 family. Amino acid/auxin permease (AAAP) (TC 2.A.18.2) subfamily.

Its subcellular location is the cell membrane. Its function is as follows. Amino acid transporter. This is Lysine histidine transporter-like 4 from Arabidopsis thaliana (Mouse-ear cress).